A 434-amino-acid polypeptide reads, in one-letter code: Methylenetetrahydrofolate--tRNA-(uracil-5-)-methyltransferase TrmFO (434 aa).

9–14 (GAGLAG) lines the FAD pocket.

This sequence belongs to the MnmG family. TrmFO subfamily. FAD serves as cofactor.

It localises to the cytoplasm. It carries out the reaction uridine(54) in tRNA + (6R)-5,10-methylene-5,6,7,8-tetrahydrofolate + NADH + H(+) = 5-methyluridine(54) in tRNA + (6S)-5,6,7,8-tetrahydrofolate + NAD(+). The enzyme catalyses uridine(54) in tRNA + (6R)-5,10-methylene-5,6,7,8-tetrahydrofolate + NADPH + H(+) = 5-methyluridine(54) in tRNA + (6S)-5,6,7,8-tetrahydrofolate + NADP(+). In terms of biological role, catalyzes the folate-dependent formation of 5-methyl-uridine at position 54 (M-5-U54) in all tRNAs. The chain is Methylenetetrahydrofolate--tRNA-(uracil-5-)-methyltransferase TrmFO from Bacillus pumilus (strain SAFR-032).